Reading from the N-terminus, the 630-residue chain is Pentatricopeptide repeat-containing protein At1g26460, mitochondrial (630 aa).

A mitochondrion-targeting transit peptide spans 1-115; the sequence is MASHLFTRSR…RALSETLDMN (115 aa). A disordered region spans residues 42-79; it reads LLATESTDHDPSNHQSTSTPLPPNPATGSPLYQENWRS. Polar residues predominate over residues 67 to 77; the sequence is ATGSPLYQENW. PPR repeat units follow at residues 154 to 189, 190 to 224, 227 to 261, 468 to 503, 504 to 538, and 539 to 573; these read DVNL…SVEP, NTAS…GKDS, DDES…GYML, SVAA…GLTP, NIDS…GVKP, and DSRT…GFEP.

This sequence belongs to the PPR family. P subfamily.

The protein resides in the mitochondrion. This is Pentatricopeptide repeat-containing protein At1g26460, mitochondrial from Arabidopsis thaliana (Mouse-ear cress).